A 702-amino-acid polypeptide reads, in one-letter code: MNAHFANEVQYDLTRDPSSPASLIHVIISSECLAAAGVPLSALVRGRPDGGAAANFRVETQTRAHATGDCTPWRSAFAAYVPADAVGAILAPVIPAHPDLLPRVPSAGGLFVSLPVACDAQGVYDPYTVAALRLAWGPWATCARVLLFSYDELVPPNTRYAADGARLMRLCRHFCRYVARLGAAAPAAATEAAAHLSLGMGESGTPTPQASSVSGGAGPAVVGTPDPPISPEEQLTAPGGDTATAEDVSITQENEEILALVQRAVQDVTRRHPVRARPKHAASGVASGLRQGALVHQAVSGGALGASDAEAVLAGLEPPGGGRFASRGGPRAAGEDVLNDVLTLVPGTAKPRSLVEWLDRGWEALAGGDRPDWLWSRRSISVVLRHHYGTKQRFVVVSYENSVAWGGRRARPPRLSSELATALTEACAAERVVRPHQLSPAAQTALLRRFPALEGPLRHPRPVLQPFDIAAEVAFVARIQIACLRALGHSIRAALQGGPRIFQRLRYDFGPHQSEWLGEVTRRFPVLLENLMRALEGTAPDAFFHTAYALAVLAHLGGQGGRGRRRRLVPLSDDIPARFADSDAHYAFDYYSTSGDTLRLTNRPIAVVIDGDVNGREQSKCRFMEGSPSTAPHRVCEQYLPGESYAYLCLGFNRRLCGLVVFPGGFAFTINTAAYLSLADPVARAVGLRFCRGAATGPGLVR.

The segment at 200 to 244 (MGESGTPTPQASSVSGGAGPAVVGTPDPPISPEEQLTAPGGDTAT) is disordered. The span at 210–224 (ASSVSGGAGPAVVGT) shows a compositional bias: low complexity.

This sequence belongs to the herpesviridae CVC1 protein family. As to quaternary structure, interacts (via C-terminus) with capsid vertex component 2/CVC2.

It is found in the virion. The protein resides in the host nucleus. Its function is as follows. Capsid vertex-specific component that plays a role during viral DNA encapsidation, assuring correct genome cleavage and presumably stabilizing capsids that contain full-length viral genomes. The sequence is that of Capsid vertex component 1 from Homo sapiens (Human).